We begin with the raw amino-acid sequence, 1197 residues long: ATP-dependent helicase/nuclease subunit A (1197 aa).

In terms of domain architecture, UvrD-like helicase ATP-binding spans 2-458; the sequence is KNWTTEQQAA…IDLAKNFRSR (457 aa). 23 to 30 serves as a coordination point for ATP; it reads AAAGSGKT. One can recognise a UvrD-like helicase C-terminal domain in the interval 485-774; the sequence is RAALYQGASF…RIMSIHKSKG (290 aa).

The protein belongs to the helicase family. AddA subfamily. Heterodimer of AddA and AddB/RexB. The cofactor is Mg(2+).

The catalysed reaction is Couples ATP hydrolysis with the unwinding of duplex DNA by translocating in the 3'-5' direction.. It catalyses the reaction ATP + H2O = ADP + phosphate + H(+). The heterodimer acts as both an ATP-dependent DNA helicase and an ATP-dependent, dual-direction single-stranded exonuclease. Recognizes the chi site generating a DNA molecule suitable for the initiation of homologous recombination. The AddA nuclease domain is required for chi fragment generation; this subunit has the helicase and 3' -&gt; 5' nuclease activities. The polypeptide is ATP-dependent helicase/nuclease subunit A (Alkaliphilus metalliredigens (strain QYMF)).